Here is an 832-residue protein sequence, read N- to C-terminus: Dolichyl-phosphate-mannose--protein mannosyltransferase 6 (832 aa).

A disordered region spans residues 1 to 44 (MATGYSTGVSPFDLDENNHNDSIHHRHQNHHSQSHDSSGERDDT). N-linked (GlcNAc...) asparagine glycosylation is found at asparagine 20 and asparagine 59. The next 7 membrane-spanning stretches (helical) occupy residues 135–155 (FYFD…GYLA), 175–194 (YVFM…PLAY), 206–227 (TCWL…SKFI), 232–252 (MLLF…TLAI), 266–286 (LEIK…SVKW), 293–311 (ALVG…YQTF), and 327–347 (LIHW…IYVA). N-linked (GlcNAc...) asparagine glycosylation occurs at asparagine 357. The 55-residue stretch at 383–437 (PRSVAFGSLVTIRSQGLSPNLIHSHPHNYPQGSQEQQVTTYGFKDDNNEFLFEFG) folds into the MIR 1 domain. A glycan (N-linked (GlcNAc...) asparagine) is linked at asparagine 453. MIR domains are found at residues 466–522 (HVII…IEIQ) and 537–595 (PSEI…IEKH). 4 helical membrane passes run 676 to 696 (ITWI…VVGI), 723 to 743 (LLAA…VPFI), 755 to 775 (VPAL…ILNL), and 787 to 807 (IFKV…FWYF).

It belongs to the glycosyltransferase 39 family.

It is found in the endoplasmic reticulum membrane. The catalysed reaction is a di-trans,poly-cis-dolichyl beta-D-mannosyl phosphate + L-seryl-[protein] = 3-O-(alpha-D-mannosyl)-L-seryl-[protein] + a di-trans,poly-cis-dolichyl phosphate + H(+). The enzyme catalyses a di-trans,poly-cis-dolichyl beta-D-mannosyl phosphate + L-threonyl-[protein] = 3-O-(alpha-D-mannosyl)-L-threonyl-[protein] + a di-trans,poly-cis-dolichyl phosphate + H(+). The protein operates within protein modification; protein glycosylation. Functionally, protein mannosyltransferase (PMT) involved in hyphal morphogenesis and drug sensitivity. Transfers mannose from Dol-P-mannose to Ser or Thr residues on proteins. PMT1, PMT2 and PMT4 account for most of the protein-O-glycosylation activity, while PMT5 and PMT6 may specifically modulate a much narrower spectrum of target proteins. Required for biofilm formation and virulence. This chain is Dolichyl-phosphate-mannose--protein mannosyltransferase 6 (PMT6), found in Candida albicans (strain SC5314 / ATCC MYA-2876) (Yeast).